The chain runs to 503 residues: Potassium voltage-gated channel subfamily V member 1 (503 aa).

2 disordered regions span residues 1–20 (MDLS…DSGS) and 171–192 (KKDT…KGPC). Over 3–213 (LSPRNRPLLD…EKPGSSTAAR (211 aa)) the chain is Cytoplasmic. Residues 10 to 20 (LLDSSSLDSGS) show a composition bias toward low complexity. A compositionally biased stretch (basic and acidic residues) spans 171 to 187 (KKDTDDQESQHESEQDF). A helical membrane pass occupies residues 214–234 (IFGVISIIFVAVSIVNMALMS). Topologically, residues 235 to 241 (AELSWLN) are extracellular. A helical transmembrane segment spans residues 242–262 (LQLLEILEYVCISWFTGEFVL). Topologically, residues 263 to 279 (RFLCVKDRCHFLRKVPN) are cytoplasmic. A helical transmembrane segment spans residues 280–300 (IIDLLAILPFYITLLVESLSG). Topologically, residues 301–312 (SHTTQELENVGR) are extracellular. A helical; Voltage-sensor transmembrane segment spans residues 313–334 (LVQVLRLLRALRMLKLGRHSTG). Topologically, residues 335–348 (LRSLGMTITQCYEE) are cytoplasmic. Residues 349 to 369 (VGLLLLFLSVGISIFSTIEYF) form a helical membrane-spanning segment. A Selectivity filter motif is present at residues 395–400 (TVGYGD). Residues 410–430 (IVAFMCILSGILVLALPIAII) form a helical membrane-spanning segment. Residues 431–503 (NDRFSACYFT…RSSGGDDFWF (73 aa)) lie on the Cytoplasmic side of the membrane.

The protein belongs to the potassium channel family. V (TC 1.A.1.2) subfamily. Kv8.1/KCNV1 sub-subfamily. Heteromultimer with KCNB1 and KCNB2. Interacts with KCNC4 and KCND1.

Its subcellular location is the cell membrane. In terms of biological role, potassium channel subunit that does not form functional channels by itself. Modulates KCNB1 and KCNB2 channel activity by shifting the threshold for inactivation to more negative values and by slowing the rate of inactivation. Can down-regulate the channel activity of KCNB1, KCNB2, KCNC4 and KCND1, possibly by trapping them in intracellular membranes. In Mus musculus (Mouse), this protein is Potassium voltage-gated channel subfamily V member 1 (Kcnv1).